The chain runs to 226 residues: V-type proton ATPase subunit E 1 (226 aa).

Alanine 2 carries the post-translational modification N-acetylalanine. Tyrosine 56 is modified (phosphotyrosine).

This sequence belongs to the V-ATPase E subunit family. In terms of assembly, V-ATPase is a heteromultimeric enzyme made up of two complexes: the ATP-hydrolytic V1 complex and the proton translocation V0 complex. The V1 complex consists of three catalytic AB heterodimers that form a heterohexamer, three peripheral stalks each consisting of EG heterodimers, one central rotor including subunits D and F, and the regulatory subunits C and H. The proton translocation complex V0 consists of the proton transport subunit a, a ring of proteolipid subunits c9c'', rotary subunit d, subunits e and f, and the accessory subunits ATP6AP1/Ac45 and ATP6AP2/PRR. Interacts with RABL2/RABL2A; binds preferentially to GTP-bound RABL2. Interacts with ALDOC. Interacts with RAB11B. In terms of tissue distribution, expressed within the midpiece of sperm tail (at protein level). Kidney; localizes to early distal nephron, encompassing thick ascending limbs and distal convoluted tubules (at protein level).

The protein localises to the apical cell membrane. It is found in the cytoplasmic vesicle. Its subcellular location is the secretory vesicle. The protein resides in the synaptic vesicle membrane. It localises to the clathrin-coated vesicle membrane. Subunit of the V1 complex of vacuolar(H+)-ATPase (V-ATPase), a multisubunit enzyme composed of a peripheral complex (V1) that hydrolyzes ATP and a membrane integral complex (V0) that translocates protons. V-ATPase is responsible for acidifying and maintaining the pH of intracellular compartments and in some cell types, is targeted to the plasma membrane, where it is responsible for acidifying the extracellular environment. The chain is V-type proton ATPase subunit E 1 (Atp6v1e1) from Mus musculus (Mouse).